Consider the following 435-residue polypeptide: Origin recognition complex subunit 5 (435 aa).

37 to 44 (GHTASGKT) is a binding site for ATP.

It belongs to the ORC5 family. In terms of assembly, component of ORC, a complex composed of at least 6 subunits: ORC1, ORC2, ORC3, ORC4, ORC5 and ORC6. ORC is regulated in a cell-cycle dependent manner. It is sequentially assembled at the exit from anaphase of mitosis and disassembled as cells enter S phase. In terms of processing, multi-mono-ubiquitinated by OBI1; ubiquitination is important for efficient DNA replication origin site activation. Ubiquitination levels are low in mitotic and early G1-phAse cells and are induced in late G1-/early S-phase, peaking in S-phase and decrease toward the end of the cell cycle. Abundant in spleen, ovary, prostate, testis, and colon mucosa.

The protein resides in the nucleus. It is found in the chromosome. Its function is as follows. Component of the origin recognition complex (ORC) that binds origins of replication. DNA-binding is ATP-dependent. The specific DNA sequences that define origins of replication have not been identified yet. ORC is required to assemble the pre-replication complex necessary to initiate DNA replication. This chain is Origin recognition complex subunit 5 (ORC5), found in Homo sapiens (Human).